A 327-amino-acid chain; its full sequence is Clavesin-2 (327 aa).

A CRAL-TRIO domain is found at 96-257 (IKQALKDGFP…EFGGMLPPYD (162 aa)). Positions 289 to 327 (DKELSPKSMKRSQSVVDPTALKRMDKSEEENMQPLLALD) are disordered.

In terms of assembly, forms a complex with clathrin heavy chain and gamma-adaptin.

It is found in the golgi apparatus. The protein localises to the trans-Golgi network membrane. It localises to the early endosome membrane. The protein resides in the cytoplasmic vesicle. Its subcellular location is the clathrin-coated vesicle. Required for normal morphology of late endosomes and/or lysosomes in neurons. Binds phosphatidylinositol 3,5-bisphosphate (PtdIns(3,5)P2). This is Clavesin-2 (Clvs2) from Mus musculus (Mouse).